A 446-amino-acid chain; its full sequence is Exodeoxyribonuclease 7 large subunit (446 aa).

Belongs to the XseA family. In terms of assembly, heterooligomer composed of large and small subunits.

Its subcellular location is the cytoplasm. It catalyses the reaction Exonucleolytic cleavage in either 5'- to 3'- or 3'- to 5'-direction to yield nucleoside 5'-phosphates.. Its function is as follows. Bidirectionally degrades single-stranded DNA into large acid-insoluble oligonucleotides, which are then degraded further into small acid-soluble oligonucleotides. The polypeptide is Exodeoxyribonuclease 7 large subunit (Ligilactobacillus salivarius (strain UCC118) (Lactobacillus salivarius)).